The following is a 344-amino-acid chain: Protein RecA (344 aa).

65–72 (GPESSGKT) contacts ATP. The segment covering 323 to 337 (ELREKFQPAEAPREA) has biased composition (basic and acidic residues). Positions 323-344 (ELREKFQPAEAPREAGDDEDKE) are disordered.

The protein belongs to the RecA family.

It localises to the cytoplasm. Can catalyze the hydrolysis of ATP in the presence of single-stranded DNA, the ATP-dependent uptake of single-stranded DNA by duplex DNA, and the ATP-dependent hybridization of homologous single-stranded DNAs. It interacts with LexA causing its activation and leading to its autocatalytic cleavage. The protein is Protein RecA of Xanthomonas axonopodis pv. citri (strain 306).